Consider the following 107-residue polypeptide: Protein RnfH (107 aa).

Positions 82-107 (ARRKRAEKAKEEGRANKVTGGRPIER) are disordered.

Belongs to the UPF0125 (RnfH) family.

In Pseudoalteromonas translucida (strain TAC 125), this protein is Protein RnfH.